The primary structure comprises 480 residues: Gasdermin-C2 (480 aa).

The triggers pyroptosis stretch occupies residues 1 to 226 (MGYSFDRASK…TCVILPSATK (226 aa)).

The protein belongs to the gasdermin family. In terms of assembly, homooligomer; homooligomeric ring-shaped pore complex containing 27-28 subunits when inserted in the membrane. Cleavage by CASP8 relieves autoinhibition by releasing the N-terminal moiety (Gasdermin-C2, N-terminal) that initiates pyroptosis. Post-translationally, palmitoylated.

Its subcellular location is the cytoplasm. It is found in the cytosol. It localises to the cell membrane. Its activity is regulated as follows. The full-length protein before cleavage is inactive: intramolecular interactions between N- and C-terminal domains mediate autoinhibition in the absence of activation signal. The intrinsic pyroptosis-inducing activity is carried by the released N-terminal moiety (Gasdermin-C2, N-terminal) following cleavage by caspase CASP8 in response to type-2 immunity following worm infection. Functionally, this form constitutes the precursor of the pore-forming protein: upon cleavage, the released N-terminal moiety (Gasdermin-C2, N-terminal) binds to membranes and forms pores, triggering pyroptosis. In terms of biological role, pore-forming protein that causes membrane permeabilization and pyroptosis in response to type-2 immunity. Produced by the cleavage of gasdermin-C2 in response to type-2 immunity following worm infection. After cleavage, moves to the plasma membrane where it strongly binds to membrane inner leaflet lipids. Homooligomerizes within the membrane and forms pores of 10-15 nanometers (nm) of inner diameter, triggering pyroptosis and lytic cell death in enterocytes. This Mus musculus (Mouse) protein is Gasdermin-C2.